A 259-amino-acid chain; its full sequence is Bis(5'-nucleosyl)-tetraphosphatase, symmetrical (259 aa).

The protein belongs to the Ap4A hydrolase family.

It carries out the reaction P(1),P(4)-bis(5'-adenosyl) tetraphosphate + H2O = 2 ADP + 2 H(+). Hydrolyzes diadenosine 5',5'''-P1,P4-tetraphosphate to yield ADP. This is Bis(5'-nucleosyl)-tetraphosphatase, symmetrical (apaH) from Klebsiella aerogenes (Enterobacter aerogenes).